A 279-amino-acid polypeptide reads, in one-letter code: MTARMEQRFADVAAEGRPVLVTYFMGGDPDFETSLSIMQALPKAGADVIELGVPFSDPMADGPAIQLAGQRALKAGQTLAKTLELARRFRAEDQRTPIVLMGYYNPIYIYGVERFLNDAVEAGVDGLIVVDLPPEMDDELCIPALKKGISFIRLATPTTDDRRLPKVLENTSGFVYYVSMTGITGSALPDPSRIAGAVARIKSHTSLPVCVGFGVKTAEHARVIGASADGVVVGTAIVNQIASSLTEEGRVTEATVPGVEALVRGLSAGVRAARLAAAE.

Catalysis depends on proton acceptor residues glutamate 50 and aspartate 61.

It belongs to the TrpA family. As to quaternary structure, tetramer of two alpha and two beta chains.

The enzyme catalyses (1S,2R)-1-C-(indol-3-yl)glycerol 3-phosphate + L-serine = D-glyceraldehyde 3-phosphate + L-tryptophan + H2O. It functions in the pathway amino-acid biosynthesis; L-tryptophan biosynthesis; L-tryptophan from chorismate: step 5/5. The alpha subunit is responsible for the aldol cleavage of indoleglycerol phosphate to indole and glyceraldehyde 3-phosphate. The chain is Tryptophan synthase alpha chain from Sinorhizobium fredii (strain NBRC 101917 / NGR234).